The chain runs to 80 residues: Protein FAM229B (80 aa).

Residues 1–45 (MPFRFGTQPRRFPVEGGDSSIELESGLSSSASCNGKETSPNRQLR) are disordered. Over residues 15-32 (EGGDSSIELESGLSSSAS) the composition is skewed to low complexity. Residues 33-42 (CNGKETSPNR) show a composition bias toward polar residues.

Belongs to the FAM229 family.

This Rattus norvegicus (Rat) protein is Protein FAM229B (Fam229b).